The chain runs to 475 residues: UDP-N-acetylmuramate--L-alanine ligase (475 aa).

Residue 121 to 127 (GTHGKTT) coordinates ATP.

It belongs to the MurCDEF family.

It localises to the cytoplasm. It carries out the reaction UDP-N-acetyl-alpha-D-muramate + L-alanine + ATP = UDP-N-acetyl-alpha-D-muramoyl-L-alanine + ADP + phosphate + H(+). It participates in cell wall biogenesis; peptidoglycan biosynthesis. Cell wall formation. The polypeptide is UDP-N-acetylmuramate--L-alanine ligase (Salinibacter ruber (strain DSM 13855 / M31)).